The sequence spans 340 residues: Putative cystathionine beta-lyase (340 aa).

An N6-(pyridoxal phosphate)lysine modification is found at lysine 208.

The protein belongs to the trans-sulfuration enzymes family. Pyridoxal 5'-phosphate is required as a cofactor.

The catalysed reaction is L,L-cystathionine + H2O = L-homocysteine + pyruvate + NH4(+). It catalyses the reaction an S-substituted L-cysteine + H2O = a thiol + pyruvate + NH4(+). The protein operates within amino-acid biosynthesis; L-methionine biosynthesis via de novo pathway; L-homocysteine from L-cystathionine: step 1/1. The polypeptide is Putative cystathionine beta-lyase (IRC7) (Saccharomyces cerevisiae (strain ATCC 204508 / S288c) (Baker's yeast)).